The following is a 476-amino-acid chain: Glutamyl-tRNA(Gln) amidotransferase subunit A (476 aa).

Residues lysine 70 and serine 145 each act as charge relay system in the active site. The active-site Acyl-ester intermediate is the serine 169.

The protein belongs to the amidase family. GatA subfamily. As to quaternary structure, heterotrimer of A, B and C subunits.

The catalysed reaction is L-glutamyl-tRNA(Gln) + L-glutamine + ATP + H2O = L-glutaminyl-tRNA(Gln) + L-glutamate + ADP + phosphate + H(+). Functionally, allows the formation of correctly charged Gln-tRNA(Gln) through the transamidation of misacylated Glu-tRNA(Gln) in organisms which lack glutaminyl-tRNA synthetase. The reaction takes place in the presence of glutamine and ATP through an activated gamma-phospho-Glu-tRNA(Gln). This is Glutamyl-tRNA(Gln) amidotransferase subunit A from Methanosarcina acetivorans (strain ATCC 35395 / DSM 2834 / JCM 12185 / C2A).